A 501-amino-acid chain; its full sequence is Cytochrome P450 7A1 (501 aa).

Residues 4–24 (IFWIWGICLSVCCCLWLILGL) traverse the membrane as a helical segment. Cys441 lines the heme pocket.

The protein belongs to the cytochrome P450 family. It depends on heme as a cofactor. Detected in liver.

The protein localises to the endoplasmic reticulum membrane. It is found in the microsome membrane. It carries out the reaction cholesterol + reduced [NADPH--hemoprotein reductase] + O2 = 7alpha-hydroxycholesterol + oxidized [NADPH--hemoprotein reductase] + H2O + H(+). The catalysed reaction is 4beta-hydroxycholesterol + reduced [NADPH--hemoprotein reductase] + O2 = 4beta,7alpha-dihydroxycholesterol + oxidized [NADPH--hemoprotein reductase] + H2O + H(+). It catalyses the reaction lathosterol + reduced [NADPH--hemoprotein reductase] + O2 = 7alpha,8alpha-epoxy-5alpha-cholestan-3beta-ol + oxidized [NADPH--hemoprotein reductase] + H2O + H(+). The enzyme catalyses lathosterol + reduced [NADPH--hemoprotein reductase] + O2 = 5alpha-cholestan-7-oxo-3beta-ol + oxidized [NADPH--hemoprotein reductase] + H2O + H(+). It carries out the reaction 7-dehydrocholesterol + reduced [NADPH--hemoprotein reductase] + O2 = 7-oxocholesterol + oxidized [NADPH--hemoprotein reductase] + H2O + H(+). The catalysed reaction is (24S)-hydroxycholesterol + reduced [NADPH--hemoprotein reductase] + O2 = (24S)-7alpha-dihydroxycholesterol + oxidized [NADPH--hemoprotein reductase] + H2O + H(+). It catalyses the reaction (24R)-hydroxycholesterol + reduced [NADPH--hemoprotein reductase] + O2 = (24R)-7alpha-dihydroxycholesterol + oxidized [NADPH--hemoprotein reductase] + H2O + H(+). The protein operates within lipid metabolism; bile acid biosynthesis. It participates in steroid metabolism; cholesterol degradation. Its function is as follows. A cytochrome P450 monooxygenase involved in the metabolism of endogenous cholesterol and its oxygenated derivatives (oxysterols). Mechanistically, uses molecular oxygen inserting one oxygen atom into a substrate, and reducing the second into a water molecule, with two electrons provided by NADPH via cytochrome P450 reductase (CPR; NADPH-ferrihemoprotein reductase). Functions as a critical regulatory enzyme of bile acid biosynthesis and cholesterol homeostasis. Catalyzes the hydroxylation of carbon hydrogen bond at 7-alpha position of cholesterol, a rate-limiting step in cholesterol catabolism and bile acid biosynthesis. 7-alpha hydroxylates several oxysterols, including 4beta-hydroxycholesterol and 24-hydroxycholesterol. Catalyzes the oxidation of the 7,8 double bond of 7-dehydrocholesterol and lathosterol with direct and predominant formation of the 7-keto derivatives. This is Cytochrome P450 7A1 (CYP7A1) from Oryctolagus cuniculus (Rabbit).